A 157-amino-acid polypeptide reads, in one-letter code: Crossover junction endodeoxyribonuclease RuvC (157 aa).

Active-site residues include aspartate 7, glutamate 70, and aspartate 142. 3 residues coordinate Mg(2+): aspartate 7, glutamate 70, and aspartate 142.

It belongs to the RuvC family. In terms of assembly, homodimer which binds Holliday junction (HJ) DNA. The HJ becomes 2-fold symmetrical on binding to RuvC with unstacked arms; it has a different conformation from HJ DNA in complex with RuvA. In the full resolvosome a probable DNA-RuvA(4)-RuvB(12)-RuvC(2) complex forms which resolves the HJ. It depends on Mg(2+) as a cofactor.

The protein localises to the cytoplasm. The enzyme catalyses Endonucleolytic cleavage at a junction such as a reciprocal single-stranded crossover between two homologous DNA duplexes (Holliday junction).. Functionally, the RuvA-RuvB-RuvC complex processes Holliday junction (HJ) DNA during genetic recombination and DNA repair. Endonuclease that resolves HJ intermediates. Cleaves cruciform DNA by making single-stranded nicks across the HJ at symmetrical positions within the homologous arms, yielding a 5'-phosphate and a 3'-hydroxyl group; requires a central core of homology in the junction. The consensus cleavage sequence is 5'-(A/T)TT(C/G)-3'. Cleavage occurs on the 3'-side of the TT dinucleotide at the point of strand exchange. HJ branch migration catalyzed by RuvA-RuvB allows RuvC to scan DNA until it finds its consensus sequence, where it cleaves and resolves the cruciform DNA. This chain is Crossover junction endodeoxyribonuclease RuvC, found in Synechococcus sp. (strain RCC307).